The chain runs to 224 residues: Transcriptional regulatory protein TctD (224 aa).

Residues 2–116 (RLLLAEDNRE…ELDARLRALL (115 aa)) form the Response regulatory domain. D51 carries the post-translational modification 4-aspartylphosphate. The segment at residues 121 to 219 (GQVHEVQQLG…LRGLGYVLER (99 aa)) is a DNA-binding region (ompR/PhoB-type).

Functionally, transcriptional activator of the tctI tricarboxylate transport system operon. In Salmonella typhimurium (strain SL1344), this protein is Transcriptional regulatory protein TctD (tctD).